A 172-amino-acid polypeptide reads, in one-letter code: Centrin-1 (172 aa).

The disordered stretch occupies residues 1–31; the sequence is MASGFKKPSAASTGQKRKVAPKPELTEDQKQ. EF-hand domains are found at residues 28–63, 64–99, 101–136, and 137–172; these read DQKQEVREAFDLFDVDGSGTIDAKELKVAMRALGFE, PRKEEMKKMISEVDREGTGKISFNDFLAVMTQKMSE, DTKEEILKAFRLFDDDETGKISFKNLKRVANELGEN, and LTDEELQEMIDEADRDGDGEVNEEEFLRIMKKTSLY. 5 residues coordinate Ca(2+): Asp-41, Asp-43, Ser-45, Thr-47, and Glu-52. Ca(2+)-binding residues include Asp-150, Asp-152, Asp-154, Glu-156, and Glu-161.

It belongs to the centrin family. In terms of assembly, monomer. Interacts with CIMAP3. Interacts with USP49.

Its subcellular location is the cytoplasm. The protein resides in the cytoskeleton. It is found in the microtubule organizing center. The protein localises to the centrosome. It localises to the cell projection. Its subcellular location is the cilium. Functionally, plays a fundamental role in microtubule-organizing center structure and function. Plays a role in sperm cilia formation. This Homo sapiens (Human) protein is Centrin-1.